Here is a 440-residue protein sequence, read N- to C-terminus: Protein arginine N-methyltransferase 2 (440 aa).

A disordered region spans residues 147-194 (LSSGSEDGDEEMEVQQDDDEEAPQLVSTEDVEPTVEEPKFIPPDAKEK). Residues 152-168 (EDGDEEMEVQQDDDEEA) are compositionally biased toward acidic residues. Positions 182–194 (EEPKFIPPDAKEK) are enriched in basic and acidic residues. An RMT2 domain is found at 192–440 (KEKQVTSEEY…RYAVGTSNRL (249 aa)). Residues Y201, M230, 252–257 (FGMGIV), 273–275 (EAH), 310–311 (WQ), and D330 contribute to the S-adenosyl-L-methionine site.

The protein belongs to the class I-like SAM-binding methyltransferase superfamily. RMT2 methyltransferase family. As to quaternary structure, monomer.

The protein resides in the cytoplasm. Its subcellular location is the nucleus. Functionally, S-adenosyl-L-methionine-dependent protein-arginine N-methyltransferase that methylates the delta-nitrogen atom of arginine residues to form N5-methylarginine (type IV) in target proteins. Monomethylates ribosomal protein L12. This chain is Protein arginine N-methyltransferase 2, found in Gibberella zeae (strain ATCC MYA-4620 / CBS 123657 / FGSC 9075 / NRRL 31084 / PH-1) (Wheat head blight fungus).